A 403-amino-acid polypeptide reads, in one-letter code: Poly(rC)-binding protein 4 (403 aa).

3 KH domains span residues 17–67 (TLTL…TITG), 101–154 (PVTL…TVSG), and 241–293 (TSSQ…TITG).

As to expression, widely expressed, with highest levels in testis and lowest in heart.

The protein localises to the cytoplasm. Its function is as follows. Single-stranded nucleic acid binding protein that binds preferentially to oligo dC. This chain is Poly(rC)-binding protein 4 (Pcbp4), found in Mus musculus (Mouse).